The chain runs to 203 residues: Dual specificity phosphatase 29 (203 aa).

Residues 47-193 (HVNQVWPRIY…LRALDIALQE (147 aa)) enclose the Tyrosine-protein phosphatase domain. 137–144 (HCVMGRSR) provides a ligand contact to substrate. Cys138 functions as the Phosphocysteine intermediate in the catalytic mechanism.

Belongs to the protein-tyrosine phosphatase family. Non-receptor class dual specificity subfamily.

The protein resides in the cytoplasm. It localises to the nucleus. It catalyses the reaction O-phospho-L-tyrosyl-[protein] + H2O = L-tyrosyl-[protein] + phosphate. The enzyme catalyses O-phospho-L-seryl-[protein] + H2O = L-seryl-[protein] + phosphate. It carries out the reaction O-phospho-L-threonyl-[protein] + H2O = L-threonyl-[protein] + phosphate. Functionally, dual specificity phosphatase able to dephosphorylate phosphotyrosine, phosphoserine and phosphothreonine residues within the same substrate, with a preference for phosphotyrosine as a substrate. Involved in the modulation of AMPK and MAPK1/2 signaling pathways. The protein is Dual specificity phosphatase 29 (dusp29) of Oryzias latipes (Japanese rice fish).